Reading from the N-terminus, the 226-residue chain is UPF0111 protein HI_1603 (226 aa).

The protein belongs to the UPF0111 family.

In Haemophilus influenzae (strain ATCC 51907 / DSM 11121 / KW20 / Rd), this protein is UPF0111 protein HI_1603.